The following is a 556-amino-acid chain: mRNA-capping enzyme subunit beta (556 aa).

Disordered stretches follow at residues 1-28 (MKPS…DNNV) and 56-217 (LPPV…QKTS). A compositionally biased stretch (polar residues) spans 63–74 (VSTSDTGNTSHT). Residues 85-96 (ESDETDTDDEPG) are compositionally biased toward acidic residues. Composition is skewed to basic and acidic residues over residues 103-131 (TKFR…KDKQ) and 139-212 (IQLD…KDIF).

The protein belongs to the fungal TPase family. As to quaternary structure, heterodimer. The mRNA-capping enzyme is composed of two separate chains alpha and beta, respectively a mRNA guanylyltransferase and an mRNA 5'-triphosphate monophosphatase. Requires Mg(2+) as cofactor.

It is found in the nucleus. The enzyme catalyses a 5'-end triphospho-ribonucleoside in mRNA + H2O = a 5'-end diphospho-ribonucleoside in mRNA + phosphate + H(+). Functionally, first step of mRNA capping. Converts the 5'-triphosphate end of a nascent mRNA chain into a diphosphate end. This chain is mRNA-capping enzyme subunit beta (CET1), found in Kluyveromyces lactis (strain ATCC 8585 / CBS 2359 / DSM 70799 / NBRC 1267 / NRRL Y-1140 / WM37) (Yeast).